A 165-amino-acid polypeptide reads, in one-letter code: Type 3 secretion system regulator YopR (165 aa).

The protein belongs to the YopR family.

It is found in the secreted. May be involved in the regulation of the assembly of the type III secretion system (T3SS), also called injectisome, which is used to inject bacterial effector proteins into eukaryotic host cells. May control the secretion and/or polymerization of YscF/SctF, the principal component of the needle filament, thereby impacting the assembly of the T3SS. Involved in pathogenesis. The chain is Type 3 secretion system regulator YopR from Yersinia pestis.